The primary structure comprises 451 residues: UPF0210 protein Asuc_1169 (451 aa).

It belongs to the UPF0210 family. Homodimer.

The chain is UPF0210 protein Asuc_1169 from Actinobacillus succinogenes (strain ATCC 55618 / DSM 22257 / CCUG 43843 / 130Z).